Here is a 246-residue protein sequence, read N- to C-terminus: 5'-nucleotidase SurE (246 aa).

A divalent metal cation contacts are provided by Asp-8, Asp-9, Ser-39, and Asn-91.

The protein belongs to the SurE nucleotidase family. A divalent metal cation is required as a cofactor.

The protein resides in the cytoplasm. It catalyses the reaction a ribonucleoside 5'-phosphate + H2O = a ribonucleoside + phosphate. Nucleotidase that shows phosphatase activity on nucleoside 5'-monophosphates. This is 5'-nucleotidase SurE from Mannheimia succiniciproducens (strain KCTC 0769BP / MBEL55E).